Reading from the N-terminus, the 675-residue chain is DNA ligase (675 aa).

NAD(+)-binding positions include 33–37 (DAEYD), 82–83 (SL), and Glu-115. The N6-AMP-lysine intermediate role is filled by Lys-117. Residues Arg-138, Glu-175, Lys-293, and Lys-317 each coordinate NAD(+). The Zn(2+) site is built by Cys-411, Cys-414, Cys-429, and Cys-435. The BRCT domain occupies 594–675 (IADNPLKDKT…LIGYFTTIVS (82 aa)).

This sequence belongs to the NAD-dependent DNA ligase family. LigA subfamily. The cofactor is Mg(2+). It depends on Mn(2+) as a cofactor.

The enzyme catalyses NAD(+) + (deoxyribonucleotide)n-3'-hydroxyl + 5'-phospho-(deoxyribonucleotide)m = (deoxyribonucleotide)n+m + AMP + beta-nicotinamide D-nucleotide.. DNA ligase that catalyzes the formation of phosphodiester linkages between 5'-phosphoryl and 3'-hydroxyl groups in double-stranded DNA using NAD as a coenzyme and as the energy source for the reaction. It is essential for DNA replication and repair of damaged DNA. The chain is DNA ligase from Glaesserella parasuis serovar 5 (strain SH0165) (Haemophilus parasuis).